The following is a 337-amino-acid chain: GTP 3',8-cyclase (337 aa).

One can recognise a Radical SAM core domain in the interval 17–243 (PFQRQYYYLR…HKSHTDGPAK (227 aa)). Arginine 26 contributes to the GTP binding site. 2 residues coordinate [4Fe-4S] cluster: cysteine 33 and cysteine 37. S-adenosyl-L-methionine is bound at residue tyrosine 39. Cysteine 40 provides a ligand contact to [4Fe-4S] cluster. Residue arginine 76 participates in GTP binding. Glycine 80 provides a ligand contact to S-adenosyl-L-methionine. Residue threonine 107 coordinates GTP. An S-adenosyl-L-methionine-binding site is contributed by serine 131. Lysine 168 is a binding site for GTP. Methionine 202 is a binding site for S-adenosyl-L-methionine. Positions 265 and 268 each coordinate [4Fe-4S] cluster. Position 270 to 272 (270 to 272 (RLR)) interacts with GTP. A [4Fe-4S] cluster-binding site is contributed by cysteine 282.

This sequence belongs to the radical SAM superfamily. MoaA family. In terms of assembly, monomer and homodimer. [4Fe-4S] cluster serves as cofactor.

The enzyme catalyses GTP + AH2 + S-adenosyl-L-methionine = (8S)-3',8-cyclo-7,8-dihydroguanosine 5'-triphosphate + 5'-deoxyadenosine + L-methionine + A + H(+). It functions in the pathway cofactor biosynthesis; molybdopterin biosynthesis. Functionally, catalyzes the cyclization of GTP to (8S)-3',8-cyclo-7,8-dihydroguanosine 5'-triphosphate. The sequence is that of GTP 3',8-cyclase from Haemophilus influenzae (strain PittEE).